A 207-amino-acid chain; its full sequence is Putative 3-methyladenine DNA glycosylase (207 aa).

This sequence belongs to the DNA glycosylase MPG family.

The sequence is that of Putative 3-methyladenine DNA glycosylase from Burkholderia lata (strain ATCC 17760 / DSM 23089 / LMG 22485 / NCIMB 9086 / R18194 / 383).